The following is a 201-amino-acid chain: Large ribosomal subunit protein mL61 (201 aa).

Positions 87-118 (RDDKDAKPSSTPFPTSSADGSSPAPKPAQGER) are disordered. Over residues 94-106 (PSSTPFPTSSADG) the composition is skewed to polar residues.

It belongs to the mitochondrion-specific ribosomal protein mL61 family. As to quaternary structure, component of the mitochondrial large ribosomal subunit (mt-LSU). Mature N.crassa 74S mitochondrial ribosomes consist of a small (37S) and a large (54S) subunit. The 37S small subunit contains a 16S ribosomal RNA (16S mt-rRNA) and 32 different proteins. The 54S large subunit contains a 23S rRNA (23S mt-rRNA) and 42 different proteins.

Its subcellular location is the mitochondrion. Its function is as follows. Component of the mitochondrial ribosome (mitoribosome), a dedicated translation machinery responsible for the synthesis of mitochondrial genome-encoded proteins, including at least some of the essential transmembrane subunits of the mitochondrial respiratory chain. The mitoribosomes are attached to the mitochondrial inner membrane and translation products are cotranslationally integrated into the membrane. The protein is Large ribosomal subunit protein mL61 (mrp49) of Neurospora crassa (strain ATCC 24698 / 74-OR23-1A / CBS 708.71 / DSM 1257 / FGSC 987).